A 677-amino-acid chain; its full sequence is Probable sulfate transporter 4.2 (677 aa).

The Cytoplasmic portion of the chain corresponds to 1–83 (MSLAVKDLST…RTYRWHQYFK (83 aa)). The chain crosses the membrane as a helical span at residues 84 to 104 (LDLMAGITVGIMLVPQAMSYA). The Extracellular segment spans residues 105–108 (RLAG). The helical transmembrane segment at 109-129 (LQPIYGLYSSFVPVFVYAVFG) threads the bilayer. Residues 130–133 (SSRQ) are Cytoplasmic-facing. Residues 134-154 (LAVGPVALVSLLVSNALSGIV) traverse the membrane as a helical segment. The Extracellular segment spans residues 155–161 (DPSEELY). A helical transmembrane segment spans residues 162-182 (TELAILLALMVGIFESIMGFL). Over 183-189 (RLGWLIR) the chain is Cytoplasmic. A helical transmembrane segment spans residues 190–210 (FISHSVISGFTTASAVVIGLS). Topologically, residues 211 to 241 (QLKYFLGYSVSRSSKIMPVIDSIIAGADQFK) are extracellular. A helical transmembrane segment spans residues 242-262 (WPPFLLGCTILVILLVMKHVG). At 263–269 (KAKKELR) the chain is on the cytoplasmic side. A helical membrane pass occupies residues 270–290 (FIRAAGPLTGLALGTIIAKVF). Topologically, residues 291–318 (HPPSITLVGDIPQGLPKFSFPKSFDHAK) are extracellular. The helical transmembrane segment at 319 to 339 (LLLPTSALITGVAILESVGIA) threads the bilayer. Over 340–355 (KALAAKNRYELDSNSE) the chain is Cytoplasmic. The chain crosses the membrane as a helical span at residues 356-376 (LFGLGVANIFGSLFSAYPTTG). Over 377-392 (SFSRSAVNSESEAKTG) the chain is Extracellular. A helical membrane pass occupies residues 393-413 (LSGLVTGIIIGCSLLFLTPMF). The Cytoplasmic segment spans residues 414-420 (KFIPQCA). A helical transmembrane segment spans residues 421–441 (LAAIVISAVSGLVDYEGAIFL). The Extracellular segment spans residues 442–459 (WRVDKRDFTLWTITSTTT). The chain crosses the membrane as a helical span at residues 460-480 (LFFGIEIGVLIGVGFSLAFVI). At 481–677 (HESANPHIAV…LEEPLLSREK (197 aa)) the chain is on the cytoplasmic side. The STAS domain maps to 505 to 629 (QYPEAYTYNG…VRVHDAVQVC (125 aa)).

It belongs to the SLC26A/SulP transporter (TC 2.A.53) family.

It is found in the membrane. H(+)/sulfate cotransporter that may play a role in the regulation of sulfate assimilation. In Arabidopsis thaliana (Mouse-ear cress), this protein is Probable sulfate transporter 4.2 (SULTR4;2).